We begin with the raw amino-acid sequence, 615 residues long: MRTFLSLKTCLLSALLLCVNSIAASKIISVSDFGLKPDSRINAVPFIQKAIDACKQHPGSTLVFPKGRYDFWAQHAIEKDYYETNTYDVNPKILAVLLEQINDLTIDGNGSEFIMHGRMQPFTLDHCRNITLKNFSVDWEIPLTAQGIVTQSTSEYLEIEIDSHQYPYIIENKRLTFVGEGWKSSLWAIMQFDPDTHLVLPNTGDNLGWRSYDATEINPGLIRLSDPKKEADKFFPAPGTVLVLRHSTRDHAGIFIYHSMDTKLENVKLFHTCGLGILSQYSKNISFNDVHIIPNTSKKRVLSGHDDGFHFMGCSGLLKIENCSWAGLMDDPINIHGTCSRIMEVLSPTRIKCKFMQDMSEGMEWGRPDETIGFIEHKTMRTVATGKMNKFEALNKAEFIIELSVPLPAGVEAGYVIENLTCTPDAEIRNCHFGSCRARGLLVSTPGKVIIENNVFESSGSAILIAGDANAWYESGAVKDVLIRNNDFRYPCNSSIYQFCEAVISIDPEIPTPEQKYPYHRNIRIMDNTFHLFDYPILFARSVNGLTFSSNTLIRDTTYQPYHYRKEGITLEACKSVVISNNKIEGDVLGRIVTIEKMKPSDVKISKNPFFKLKK.

A signal peptide spans 1–23; it reads MRTFLSLKTCLLSALLLCVNSIA. PbH1 repeat units lie at residues 282-313, 423-445, 446-467, 478-500, 520-541, and 543-573; these read SKNISFNDVHIIPNTSKKRVLSGHDDGFHFMG, TPDAEIRNCHFGSCRARGLLVST, PGKVIIENNVFESSGSAILIAG, VKDVLIRNNDFRYPCNSSIYQFC, HRNIRIMDNTFHLFDYPILFAR, and VNGLTFSSNTLIRDTTYQPYHYRKEGITLEA.

The protein belongs to the glycosyl hydrolase 110 family. B subfamily.

The catalysed reaction is Hydrolysis of terminal, non-reducing branched (1-&gt;3)-alpha-D-galactosidic residues, producing free D-galactose.. It catalyses the reaction Hydrolysis of terminal, non-reducing linear (1-&gt;3)-alpha-D-galactosidic residues, producing free D-galactose.. The enzyme catalyses Hydrolysis of terminal, non-reducing alpha-D-galactose residues in alpha-D-galactosides, including galactose oligosaccharides, galactomannans and galactolipids.. Functionally, alpha-galactosidase. Removes both branched alpha-1,3-linked galactose residues of blood group B antigens and linear alpha-1,3-linked galactose structures. This is Alpha-1,3-galactosidase B (glaB) from Bacteroides thetaiotaomicron (strain ATCC 29148 / DSM 2079 / JCM 5827 / CCUG 10774 / NCTC 10582 / VPI-5482 / E50).